The sequence spans 58 residues: Large ribosomal subunit protein bL32c (58 aa).

It belongs to the bacterial ribosomal protein bL32 family.

The protein resides in the plastid. Its subcellular location is the chloroplast. This Adiantum capillus-veneris (Maidenhair fern) protein is Large ribosomal subunit protein bL32c (rpl32).